The chain runs to 86 residues: Co-chaperonin GroES (86 aa).

The protein belongs to the GroES chaperonin family. In terms of assembly, heptamer of 7 subunits arranged in a ring. Interacts with the chaperonin GroEL.

It localises to the cytoplasm. Its function is as follows. Together with the chaperonin GroEL, plays an essential role in assisting protein folding. The GroEL-GroES system forms a nano-cage that allows encapsulation of the non-native substrate proteins and provides a physical environment optimized to promote and accelerate protein folding. GroES binds to the apical surface of the GroEL ring, thereby capping the opening of the GroEL channel. In Campylobacter lari (strain RM2100 / D67 / ATCC BAA-1060), this protein is Co-chaperonin GroES.